We begin with the raw amino-acid sequence, 251 residues long: Flap endonuclease Xni (251 aa).

A Mg(2+)-binding site is contributed by D104. The 5'-3' exonuclease domain maps to 160 to 249 (VQPQQLPDYW…IDGNLQQLRL (90 aa)). K(+) contacts are provided by L171, A172, P180, V182, and I185. The tract at residues 184–189 (GIGPKS) is interaction with DNA.

This sequence belongs to the Xni family. The cofactor is Mg(2+). K(+) serves as cofactor.

Its function is as follows. Has flap endonuclease activity. During DNA replication, flap endonucleases cleave the 5'-overhanging flap structure that is generated by displacement synthesis when DNA polymerase encounters the 5'-end of a downstream Okazaki fragment. This is Flap endonuclease Xni from Escherichia coli O6:K15:H31 (strain 536 / UPEC).